The following is a 492-amino-acid chain: 2,3-bisphosphoglycerate-independent phosphoglycerate mutase (492 aa).

Mn(2+) is bound by residues Asp11 and Ser61. The active-site Phosphoserine intermediate is the Ser61. Substrate is bound by residues His118, Arg147 to Asp148, Arg178, Arg184, Arg248 to Arg251, and Lys320. Asp386, His390, Asp427, His428, and His445 together coordinate Mn(2+).

It belongs to the BPG-independent phosphoglycerate mutase family. Monomer. It depends on Mn(2+) as a cofactor.

The catalysed reaction is (2R)-2-phosphoglycerate = (2R)-3-phosphoglycerate. Its pathway is carbohydrate degradation; glycolysis; pyruvate from D-glyceraldehyde 3-phosphate: step 3/5. Its function is as follows. Catalyzes the interconversion of 2-phosphoglycerate and 3-phosphoglycerate. This is 2,3-bisphosphoglycerate-independent phosphoglycerate mutase from Campylobacter jejuni (strain RM1221).